The chain runs to 326 residues: GMP reductase (326 aa).

C175 (thioimidate intermediate) is an active-site residue. 204–227 (IIADGGIRTHGDIAKSVRFGATMV) lines the NADP(+) pocket.

The protein belongs to the IMPDH/GMPR family. GuaC type 2 subfamily.

The catalysed reaction is IMP + NH4(+) + NADP(+) = GMP + NADPH + 2 H(+). In terms of biological role, catalyzes the irreversible NADPH-dependent deamination of GMP to IMP. It functions in the conversion of nucleobase, nucleoside and nucleotide derivatives of G to A nucleotides, and in maintaining the intracellular balance of A and G nucleotides. The protein is GMP reductase of Bacillus licheniformis (strain ATCC 14580 / DSM 13 / JCM 2505 / CCUG 7422 / NBRC 12200 / NCIMB 9375 / NCTC 10341 / NRRL NRS-1264 / Gibson 46).